The sequence spans 329 residues: Ceramide synthase hyl-2 (329 aa).

An N-linked (GlcNAc...) asparagine glycan is attached at Asn22. A run of 7 helical transmembrane segments spans residues 41–61 (VLTG…IFVP), 95–115 (ALYY…ESHL), 134–154 (VAWY…GILF), 162–182 (FWQM…SWTM), 187–207 (VGTL…VGKI), 221–241 (FAGV…FWII), and 270–290 (FIML…YILF). The TLC domain maps to 86 to 298 (SRMAECAMRA…LFKIAYDTIQ (213 aa)).

It belongs to the sphingosine N-acyltransferase family. Strong expression in the gut, the posterior bulb of the pharynx, the hypoderm, and unidentified cells of the head and the tail.

The protein resides in the membrane. It carries out the reaction a very long-chain fatty acyl-CoA + a sphingoid base = an N-(very-long-chain fatty acyl)-sphingoid base + CoA + H(+). The catalysed reaction is a fatty acyl-CoA + sphinganine = an N-acylsphinganine + CoA + H(+). The enzyme catalyses docosanoyl-CoA + sphinganine = N-docosanoylsphinganine + CoA + H(+). It catalyses the reaction sphinganine + tetradecanoyl-CoA = N-(tetradecanoyl)-sphinganine + CoA + H(+). It carries out the reaction eicosanoyl-CoA + sphinganine = N-eicosanoylsphinganine + CoA + H(+). The catalysed reaction is 15-methylhexadecasphinganine + a fatty acyl-CoA = an N-acyl-15-methylhexadecasphinganine + CoA + H(+). The protein operates within lipid metabolism; sphingolipid metabolism. Functionally, catalyzes the acylation of sphingoid bases to form ceramides, which are key players in cell signaling events such as tolerances to heat, oxidation, and ultraviolet stress. C.elegans contain specific sphingoid bases, which are unique or different in structure compared to the sphingoid bases found in other animals. Two examples of these distinctive compounds are: 15-methylhexadecasphinganine and 15-methylhexadecasphing-4-enine. Exhibits substrate preference for long and very long fatty acyl-coA chains (C20-23). Required for adaptation of the nematode to anoxia. Anoxia tolerance may require one or more of the ceramide species that are either specifically or preferentially synthesized by HYL-2, and seems to be affected by a pathway that is parallel to that involving daf-2. The polypeptide is Ceramide synthase hyl-2 (hyl-2) (Caenorhabditis elegans).